A 421-amino-acid chain; its full sequence is EGFR adapter protein (421 aa).

4 disordered regions span residues 18–94, 109–154, 173–194, and 372–396; these read TFIS…PQLQ, DVQE…RLVD, EDSRPLMHSTCGSSLTSGSGCG, and PVPLTLPRPPSTRSQRSQGAYAGGT. Positions 21–30 are enriched in low complexity; it reads SSSSASSSSS. Over residues 62 to 89 the composition is skewed to basic residues; sequence FFHHHHPPAHPHPPRQQPHPHSHSHPHP. Positions 109–120 are enriched in basic and acidic residues; the sequence is DVQELSGQEHPH. The span at 181 to 194 shows a compositional bias: low complexity; sequence STCGSSLTSGSGCG. The region spanning 286-379 is the SH2 domain; sequence WFQAGIPREI…LLPVPLTLPR (94 aa).

In terms of assembly, may interact (via SH2 domain) with Egfr (when phosphorylated). In terms of tissue distribution, detected along the wing margin, with high levels of expression in two stripes of cells on either side of the dorsal/ventral boundary and lower levels of expression in a small region at the anteroposterior boundary (at protein level). High levels of expression along two parallel stripes of cells on either side of the wing pouch dorsal/ventral boundary, and slightly lower levels of expression in a region either side of the anteroposterior boundary. Also expressed in discrete regions of the wing imaginal disk outside of the pouch. Expressed in eye imaginal disk photoreceptors with highest levels of expression in R7 photoreceptor cells.

In terms of biological role, involved in the negative regulation of the Egfr/Ras signaling pathway. During wing morphogenesis, may function redundantly with PVRAP to inhibit Egfr activity and prevent uncontrolled cell growth. This Drosophila melanogaster (Fruit fly) protein is EGFR adapter protein.